Reading from the N-terminus, the 523-residue chain is GMP synthase [glutamine-hydrolyzing] (523 aa).

A Glutamine amidotransferase type-1 domain is found at 9–198; it reads PVLVVDFGAQ…LTEIAGLEQN (190 aa). The Nucleophile role is filled by Cys86. Catalysis depends on residues His172 and Glu174. Residues 199–397 form the GMPS ATP-PPase domain; that stretch reads WTAANIAEEL…LGLPEEIVGR (199 aa). ATP is bound at residue 227–233; sequence SGGVDSA.

In terms of assembly, homodimer.

The enzyme catalyses XMP + L-glutamine + ATP + H2O = GMP + L-glutamate + AMP + diphosphate + 2 H(+). It participates in purine metabolism; GMP biosynthesis; GMP from XMP (L-Gln route): step 1/1. Its function is as follows. Catalyzes the synthesis of GMP from XMP. This is GMP synthase [glutamine-hydrolyzing] from Corynebacterium glutamicum (strain R).